Reading from the N-terminus, the 236-residue chain is 7-cyano-7-deazaguanine synthase (236 aa).

Residue 7–17 (CSGGLDSVTLA) coordinates ATP. The Zn(2+) site is built by cysteine 185, cysteine 193, cysteine 196, and cysteine 199.

It belongs to the QueC family. It depends on Zn(2+) as a cofactor.

It carries out the reaction 7-carboxy-7-deazaguanine + NH4(+) + ATP = 7-cyano-7-deazaguanine + ADP + phosphate + H2O + H(+). It participates in purine metabolism; 7-cyano-7-deazaguanine biosynthesis. Its function is as follows. Catalyzes the ATP-dependent conversion of 7-carboxy-7-deazaguanine (CDG) to 7-cyano-7-deazaguanine (preQ(0)). The chain is 7-cyano-7-deazaguanine synthase from Rhizobium johnstonii (strain DSM 114642 / LMG 32736 / 3841) (Rhizobium leguminosarum bv. viciae).